The sequence spans 696 residues: DNA-directed RNA polymerase subunit beta N-terminal section (696 aa).

It belongs to the RNA polymerase beta chain family. As to quaternary structure, in plastids the minimal PEP RNA polymerase catalytic core is composed of four subunits: alpha, beta, beta', and beta''. When a (nuclear-encoded) sigma factor is associated with the core the holoenzyme is formed, which can initiate transcription.

It is found in the plastid. It localises to the chloroplast. It catalyses the reaction RNA(n) + a ribonucleoside 5'-triphosphate = RNA(n+1) + diphosphate. Functionally, DNA-dependent RNA polymerase catalyzes the transcription of DNA into RNA using the four ribonucleoside triphosphates as substrates. This chain is DNA-directed RNA polymerase subunit beta N-terminal section (rpoB1), found in Stigeoclonium helveticum (Green alga).